The sequence spans 277 residues: Indole-3-glycerol phosphate synthase (277 aa).

This sequence belongs to the TrpC family.

It carries out the reaction 1-(2-carboxyphenylamino)-1-deoxy-D-ribulose 5-phosphate + H(+) = (1S,2R)-1-C-(indol-3-yl)glycerol 3-phosphate + CO2 + H2O. The protein operates within amino-acid biosynthesis; L-tryptophan biosynthesis; L-tryptophan from chorismate: step 4/5. The polypeptide is Indole-3-glycerol phosphate synthase (Pseudomonas putida (strain W619)).